Here is an 85-residue protein sequence, read N- to C-terminus: UPF0386 protein TM1040_0419 (85 aa).

The segment at 62–85 (SKSSRPYQISEKGRRSVRAQLDNR) is disordered.

The protein belongs to the UPF0386 family.

This chain is UPF0386 protein TM1040_0419, found in Ruegeria sp. (strain TM1040) (Silicibacter sp.).